The following is a 281-amino-acid chain: 39kDa core protein OPG130 (281 aa).

A compositionally biased stretch (polar residues) spans 1–22 (MDFFNKFSQGLAESSTPKSSIY). Disordered regions lie at residues 1–33 (MDFFNKFSQGLAESSTPKSSIYYSEEKDPDTKK), 91–112 (ILLPSSTAPTPKPRQQTNTSSD), and 149–192 (NKDQ…PQPP). The span at 24–33 (SEEKDPDTKK) shows a compositional bias: basic and acidic residues. Over residues 94–112 (PSSTAPTPKPRQQTNTSSD) the composition is skewed to polar residues. Over residues 154 to 175 (TTTPPSTQPSQTLPTTTCTQQS) the composition is skewed to low complexity.

It belongs to the orthopoxvirus OPG130 family. Interacts with OPG136 and its cleaved form. Its phosphorylation state is regulated by the OPG054 kinase and the OPG106 phosphatase.

Its subcellular location is the virion. It is found in the host endoplasmic reticulum-Golgi intermediate compartment membrane. In terms of biological role, component of the virion core. Participates in virion assembly. This chain is 39kDa core protein OPG130 (OPG130), found in Vaccinia virus (strain Copenhagen) (VACV).